The chain runs to 296 residues: Putative ankyrin repeat protein FPV216 (296 aa).

2 ANK repeats span residues 73-102 (SYVN…DVNT) and 107-136 (LVIT…NINI).

The polypeptide is Putative ankyrin repeat protein FPV216 (Fowlpox virus (strain NVSL) (FPV)).